The primary structure comprises 29 residues: Brevinin-2Tc (29 aa).

Cysteine 23 and cysteine 29 form a disulfide bridge.

Belongs to the frog skin active peptide (FSAP) family. Brevinin subfamily. Expressed by the skin glands.

The protein localises to the secreted. Antibacterial activity against representative Gram-negative and Gram-positive bacteria. The chain is Brevinin-2Tc from Rana temporaria (European common frog).